A 208-amino-acid polypeptide reads, in one-letter code: Small ribosomal subunit protein uS4 (208 aa).

The 64-residue stretch at 98 to 161 folds into the S4 RNA-binding domain; sequence QRLDNVVYRM…KTNPQIVRAI (64 aa).

This sequence belongs to the universal ribosomal protein uS4 family. Part of the 30S ribosomal subunit. Contacts protein S5. The interaction surface between S4 and S5 is involved in control of translational fidelity.

One of the primary rRNA binding proteins, it binds directly to 16S rRNA where it nucleates assembly of the body of the 30S subunit. In terms of biological role, with S5 and S12 plays an important role in translational accuracy. The protein is Small ribosomal subunit protein uS4 of Campylobacter fetus subsp. fetus (strain 82-40).